The following is a 176-amino-acid chain: Large ribosomal subunit protein uL6 (176 aa).

The protein belongs to the universal ribosomal protein uL6 family. In terms of assembly, part of the 50S ribosomal subunit.

Functionally, this protein binds to the 23S rRNA, and is important in its secondary structure. It is located near the subunit interface in the base of the L7/L12 stalk, and near the tRNA binding site of the peptidyltransferase center. The chain is Large ribosomal subunit protein uL6 from Lactobacillus acidophilus (strain ATCC 700396 / NCK56 / N2 / NCFM).